The primary structure comprises 271 residues: uncharacterized protein (271 aa).

This is an uncharacterized protein from Saccharomyces cerevisiae (strain ATCC 204508 / S288c) (Baker's yeast).